The sequence spans 131 residues: Heat shock protein 15 homolog (131 aa).

Residues 6–67 enclose the S4 RNA-binding domain; sequence VRLDKWLWAA…NEEKEIKIIA (62 aa). Residues 98-131 form a disordered region; it reads ARKNNSLSMPHPDRRPNKKERRDLLKFKHQDKFE. Residues 108–131 are compositionally biased toward basic and acidic residues; it reads HPDRRPNKKERRDLLKFKHQDKFE.

This sequence belongs to the HSP15 family.

Functionally, involved in the recycling of free 50S ribosomal subunits that still carry a nascent chain. Binds RNA more specifically than DNA. Binds with very high affinity to the free 50S ribosomal subunit. Does not bind it when it is part of the 70S ribosome. The chain is Heat shock protein 15 homolog (hslR) from Haemophilus influenzae (strain ATCC 51907 / DSM 11121 / KW20 / Rd).